A 1226-amino-acid polypeptide reads, in one-letter code: Stress response protein nst1 (1226 aa).

Disordered regions lie at residues 1–225, 294–388, 423–491, 526–727, 757–876, and 944–1001; these read MKGN…QEER, ANHP…FNFG, RMAR…RMEE, EELA…KRPA, TPAF…FSNH, and GKDN…TDQA. The span at 45 to 59 shows a compositional bias: polar residues; it reads PADSAQPSPTITTAA. Residues 89–99 are compositionally biased toward basic residues; sequence NKKKAKRRQKA. A compositionally biased stretch (polar residues) spans 113-130; sequence APSNGFPSPSPSHAQQST. Over residues 131–152 the composition is skewed to basic and acidic residues; it reads EADHDDSHDEHLEEFNNRRDSR. The segment covering 170–180 has biased composition (basic residues); the sequence is KKSKKKKKKSH. Basic and acidic residues predominate over residues 211–225; the sequence is ISKEKIWNTSSQEER. Polar residues predominate over residues 326–335; sequence SYPSHHQPSH. The span at 343–372 shows a compositional bias: acidic residues; it reads AEEDDEEEEVEEEYSEDEQDEDDYSDDEPS. 2 stretches are compositionally biased toward basic and acidic residues: residues 423 to 432 and 442 to 453; these read RMAREEDARD and AGDRNAHYHPPA. The span at 454-484 shows a compositional bias: acidic residues; that stretch reads DDEVDDEEYDEDYDDDEEEEYDSQDEEETMT. Residues 517–708 adopt a coiled-coil conformation; that stretch reads ARERQNMLLE…SKQEDRAAQK (192 aa). 2 stretches are compositionally biased toward basic and acidic residues: residues 530–548 and 556–706; these read DEKR…EAQK and KKEL…DRAA. 2 stretches are compositionally biased toward low complexity: residues 707-716 and 777-790; these read QKAAALATTA and SVTT…QPGS. Composition is skewed to polar residues over residues 791 to 805 and 822 to 852; these read AVSQ…TPIL and SGTQ…SQAN.

The protein belongs to the NST1 family.

It localises to the cytoplasm. May act as a negative regulator of salt tolerance. The sequence is that of Stress response protein nst1 (nst1) from Neurospora crassa (strain ATCC 24698 / 74-OR23-1A / CBS 708.71 / DSM 1257 / FGSC 987).